The following is a 198-amino-acid chain: MIKLIVGLGNPGAEYEATRHNAGFWLVDQLARMGGATMRVEGRFHGLAARARLWDQDIWLLKPSTFMNRSGLAVVSLARFYKVLPDEIVVAHDEMDLPAGAAKLKRGGGAGGHNGLKDISAHLSTQDYWRLRLGVGHPRNAPGGAGAGREDVVNFVLKPPRREEQEAIDAAIDRCIEPLGLLARGDAERAMAQLHTTR.

TRNA is bound at residue Tyr-15. The Proton acceptor role is filled by His-20. The tRNA site is built by Phe-66, Asn-68, and Asn-114.

Belongs to the PTH family. As to quaternary structure, monomer.

It is found in the cytoplasm. The catalysed reaction is an N-acyl-L-alpha-aminoacyl-tRNA + H2O = an N-acyl-L-amino acid + a tRNA + H(+). In terms of biological role, hydrolyzes ribosome-free peptidyl-tRNAs (with 1 or more amino acids incorporated), which drop off the ribosome during protein synthesis, or as a result of ribosome stalling. Catalyzes the release of premature peptidyl moieties from peptidyl-tRNA molecules trapped in stalled 50S ribosomal subunits, and thus maintains levels of free tRNAs and 50S ribosomes. In Cupriavidus necator (strain ATCC 17699 / DSM 428 / KCTC 22496 / NCIMB 10442 / H16 / Stanier 337) (Ralstonia eutropha), this protein is Peptidyl-tRNA hydrolase.